Here is a 219-residue protein sequence, read N- to C-terminus: 3-dehydroquinate dehydratase (219 aa).

3-dehydroquinate is bound by residues Ser-10, 29 to 31 (EVR), and Arg-59. The active-site Proton donor/acceptor is the His-116. The Schiff-base intermediate with substrate role is filled by Lys-142. 3-dehydroquinate is bound by residues Arg-180 and Gln-203.

The protein belongs to the type-I 3-dehydroquinase family. Homodimer.

The catalysed reaction is 3-dehydroquinate = 3-dehydroshikimate + H2O. The protein operates within metabolic intermediate biosynthesis; chorismate biosynthesis; chorismate from D-erythrose 4-phosphate and phosphoenolpyruvate: step 3/7. Its function is as follows. Involved in the third step of the chorismate pathway, which leads to the biosynthesis of aromatic amino acids. Catalyzes the cis-dehydration of 3-dehydroquinate (DHQ) and introduces the first double bond of the aromatic ring to yield 3-dehydroshikimate. This chain is 3-dehydroquinate dehydratase, found in Methanocella arvoryzae (strain DSM 22066 / NBRC 105507 / MRE50).